We begin with the raw amino-acid sequence, 91 residues long: Small ribosomal subunit protein bS16 (91 aa).

Belongs to the bacterial ribosomal protein bS16 family.

The chain is Small ribosomal subunit protein bS16 from Staphylococcus aureus (strain Mu3 / ATCC 700698).